The chain runs to 123 residues: uncharacterized protein (123 aa).

The segment at 1 to 28 (MGLGSSKRKEEPPHKSEPKTVGRVKRAG) is disordered. A compositionally biased stretch (basic and acidic residues) spans 7–20 (KRKEEPPHKSEPKT).

It belongs to the TUSC2 family.

This is an uncharacterized protein from Caenorhabditis elegans.